The chain runs to 434 residues: Glutamate-1-semialdehyde 2,1-aminomutase (434 aa).

An N6-(pyridoxal phosphate)lysine modification is found at lysine 274.

This sequence belongs to the class-III pyridoxal-phosphate-dependent aminotransferase family. HemL subfamily. As to quaternary structure, homodimer. Requires pyridoxal 5'-phosphate as cofactor.

The protein localises to the cytoplasm. The catalysed reaction is (S)-4-amino-5-oxopentanoate = 5-aminolevulinate. The protein operates within porphyrin-containing compound metabolism; protoporphyrin-IX biosynthesis; 5-aminolevulinate from L-glutamyl-tRNA(Glu): step 2/2. This is Glutamate-1-semialdehyde 2,1-aminomutase from Acidovorax sp. (strain JS42).